Here is a 220-residue protein sequence, read N- to C-terminus: Deoxyribose-phosphate aldolase (220 aa).

The Proton donor/acceptor role is filled by Asp-89. Lys-151 serves as the catalytic Schiff-base intermediate with acetaldehyde. Lys-180 acts as the Proton donor/acceptor in catalysis.

The protein belongs to the DeoC/FbaB aldolase family. DeoC type 1 subfamily.

Its subcellular location is the cytoplasm. It catalyses the reaction 2-deoxy-D-ribose 5-phosphate = D-glyceraldehyde 3-phosphate + acetaldehyde. Its pathway is carbohydrate degradation; 2-deoxy-D-ribose 1-phosphate degradation; D-glyceraldehyde 3-phosphate and acetaldehyde from 2-deoxy-alpha-D-ribose 1-phosphate: step 2/2. Functionally, catalyzes a reversible aldol reaction between acetaldehyde and D-glyceraldehyde 3-phosphate to generate 2-deoxy-D-ribose 5-phosphate. The sequence is that of Deoxyribose-phosphate aldolase from Streptococcus suis (strain 05ZYH33).